Here is a 208-residue protein sequence, read N- to C-terminus: V-type ATP synthase subunit D (208 aa).

The protein belongs to the V-ATPase D subunit family.

In terms of biological role, produces ATP from ADP in the presence of a proton gradient across the membrane. The sequence is that of V-type ATP synthase subunit D from Streptococcus pyogenes serotype M49 (strain NZ131).